We begin with the raw amino-acid sequence, 148 residues long: Deoxyuridine 5'-triphosphate nucleotidohydrolase (148 aa).

Substrate is bound by residues 67–69, Asn-80, 84–86, and Met-94; these read RSG and LID.

The protein belongs to the dUTPase family. The cofactor is Mg(2+).

It carries out the reaction dUTP + H2O = dUMP + diphosphate + H(+). It functions in the pathway pyrimidine metabolism; dUMP biosynthesis; dUMP from dCTP (dUTP route): step 2/2. Its function is as follows. This enzyme is involved in nucleotide metabolism: it produces dUMP, the immediate precursor of thymidine nucleotides and it decreases the intracellular concentration of dUTP so that uracil cannot be incorporated into DNA. This chain is Deoxyuridine 5'-triphosphate nucleotidohydrolase, found in Burkholderia cenocepacia (strain HI2424).